The primary structure comprises 179 residues: Large ribosomal subunit protein uL5 (179 aa).

This sequence belongs to the universal ribosomal protein uL5 family. Part of the 50S ribosomal subunit; part of the 5S rRNA/L5/L18/L25 subcomplex. Contacts the 5S rRNA and the P site tRNA. Forms a bridge to the 30S subunit in the 70S ribosome.

This is one of the proteins that bind and probably mediate the attachment of the 5S RNA into the large ribosomal subunit, where it forms part of the central protuberance. In the 70S ribosome it contacts protein S13 of the 30S subunit (bridge B1b), connecting the 2 subunits; this bridge is implicated in subunit movement. Contacts the P site tRNA; the 5S rRNA and some of its associated proteins might help stabilize positioning of ribosome-bound tRNAs. The polypeptide is Large ribosomal subunit protein uL5 (Staphylococcus saprophyticus subsp. saprophyticus (strain ATCC 15305 / DSM 20229 / NCIMB 8711 / NCTC 7292 / S-41)).